Consider the following 180-residue polypeptide: uncharacterized protein (180 aa).

A disordered region spans residues 1 to 31; the sequence is MSTYEEEHGIQQNSRDYQEVGGTSQEEQRRQ. Position 2 is an N-acetylserine (S2). Residues 109–153 form an RING-type zinc finger; the sequence is CSICYTNYLEDEYPLVVELPHCHHKFDLECLSVWLSRSTTCPLCR.

This is an uncharacterized protein from Saccharomyces cerevisiae (strain ATCC 204508 / S288c) (Baker's yeast).